The sequence spans 1345 residues: Membrane-anchored lipid-binding protein LAM4 (1345 aa).

The Cytoplasmic segment spans residues 1-1197 (MTRDSKKKHH…NFSSEIFMNK (1197 aa)). Disordered stretches follow at residues 51–80 (RVGGNPDIPSLLKPETFTESPAKGSQKAAA), 115–134 (SLKGRFQDGNSNSNSVPSLS), 139–164 (EKEKLQSGKREGSSNQAEEKTPDGHD), 190–302 (DADN…SLDD), 356–397 (LPEA…KPRR), 425–447 (SFNSSNGLTNNDPEYEDREPREM), and 489–531 (STII…NGRQ). Residue Thr-66 is modified to Phosphothreonine. The span at 216 to 228 (SENSTNNKNTSST) shows a compositional bias: low complexity. The span at 246–271 (SKSSTPSNQQLNTTEAGSKSKPSSLS) shows a compositional bias: polar residues. Low complexity predominate over residues 283–294 (HSNSHSSSNAIS). Polar residues predominate over residues 425–436 (SFNSSNGLTNND). The span at 498-516 (SNGRPSSGLRRSSSKSFSS) shows a compositional bias: low complexity. The GRAM domain maps to 549 to 616 (EFHAIFKDSG…FKTIVQIEKR (68 aa)). Low complexity predominate over residues 665–677 (SNSNNTNSSSNSI). The segment at 665-722 (SNSNNTNSSSNSISDDENDDYDDDYDDYGDDDDDLYDNSNNISDSTDMTSSVSIGKPE) is disordered. The segment covering 678 to 700 (SDDENDDYDDDYDDYGDDDDDLY) has biased composition (acidic residues). A Phosphoserine modification is found at Ser-747. VASt domains are found at residues 758–930 (NEKL…TRSA) and 967–1139 (DDSI…SRAK). The interval 930–963 (ATKRKRSSKENTVTVSTLPKMEPSSHAPTEPDIQ) is disordered. Residues 1141–1158 (KKPVKKVMKSHDKHRPFH) are compositionally biased toward basic residues. The disordered stretch occupies residues 1141–1172 (KKPVKKVMKSHDKHRPFHSKVEQKSSESRKSD). Positions 1159–1172 (SKVEQKSSESRKSD) are enriched in basic and acidic residues. The chain crosses the membrane as a helical span at residues 1198–1218 (LLSPQKLFLILGLTIMLFWSP). Over 1219–1345 (RLHVFQEKNN…NIERDANDLS (127 aa)) the chain is Lumenal.

Belongs to the YSP2 family.

It is found in the endoplasmic reticulum membrane. Its function is as follows. May be involved in sterol transfer between intracellular membranes. The chain is Membrane-anchored lipid-binding protein LAM4 from Saccharomyces cerevisiae (strain ATCC 204508 / S288c) (Baker's yeast).